The sequence spans 304 residues: N-acetyl-D-glucosamine kinase (304 aa).

ATP contacts are provided by residues 4 to 11 (GFDMGGTK) and 133 to 140 (GLGGGLVI). The Zn(2+) site is built by His157, Cys177, Cys179, and Cys184.

The protein belongs to the ROK (NagC/XylR) family. NagK subfamily.

The enzyme catalyses N-acetyl-D-glucosamine + ATP = N-acetyl-D-glucosamine 6-phosphate + ADP + H(+). Its pathway is cell wall biogenesis; peptidoglycan recycling. In terms of biological role, catalyzes the phosphorylation of N-acetyl-D-glucosamine (GlcNAc) derived from cell-wall degradation, yielding GlcNAc-6-P. The protein is N-acetyl-D-glucosamine kinase of Pectobacterium atrosepticum (strain SCRI 1043 / ATCC BAA-672) (Erwinia carotovora subsp. atroseptica).